A 344-amino-acid chain; its full sequence is Methylthioribose-1-phosphate isomerase (344 aa).

Residues Arg46–Ala48, Arg89, and Gln196 each bind substrate. Asp237 acts as the Proton donor in catalysis. A substrate-binding site is contributed by Asn247–Lys248.

It belongs to the eIF-2B alpha/beta/delta subunits family. MtnA subfamily.

The enzyme catalyses 5-(methylsulfanyl)-alpha-D-ribose 1-phosphate = 5-(methylsulfanyl)-D-ribulose 1-phosphate. It participates in amino-acid biosynthesis; L-methionine biosynthesis via salvage pathway; L-methionine from S-methyl-5-thio-alpha-D-ribose 1-phosphate: step 1/6. Catalyzes the interconversion of methylthioribose-1-phosphate (MTR-1-P) into methylthioribulose-1-phosphate (MTRu-1-P). This Syntrophotalea carbinolica (strain DSM 2380 / NBRC 103641 / GraBd1) (Pelobacter carbinolicus) protein is Methylthioribose-1-phosphate isomerase.